The sequence spans 277 residues: Large ribosomal subunit protein uL2 (277 aa).

Positions 212 to 277 are disordered; that stretch reads RWRGKRPHVR…KFIVRGRKSK (66 aa). Residues 254–277 show a composition bias toward basic residues; it reads TAGKKTRDKKKASTKFIVRGRKSK.

It belongs to the universal ribosomal protein uL2 family. As to quaternary structure, part of the 50S ribosomal subunit. Forms a bridge to the 30S subunit in the 70S ribosome.

Its function is as follows. One of the primary rRNA binding proteins. Required for association of the 30S and 50S subunits to form the 70S ribosome, for tRNA binding and peptide bond formation. It has been suggested to have peptidyltransferase activity; this is somewhat controversial. Makes several contacts with the 16S rRNA in the 70S ribosome. This chain is Large ribosomal subunit protein uL2, found in Leuconostoc citreum (strain KM20).